The primary structure comprises 269 residues: 5'-nucleotidase SurE (269 aa).

The a divalent metal cation site is built by aspartate 11, aspartate 12, serine 43, and asparagine 101.

It belongs to the SurE nucleotidase family. Requires a divalent metal cation as cofactor.

It localises to the cytoplasm. It catalyses the reaction a ribonucleoside 5'-phosphate + H2O = a ribonucleoside + phosphate. Nucleotidase that shows phosphatase activity on nucleoside 5'-monophosphates. The chain is 5'-nucleotidase SurE from Prochlorococcus marinus (strain MIT 9515).